The sequence spans 31 residues: uncharacterized protein (31 aa).

A helical transmembrane segment spans residues 7–29 (TVVLINFFAAVGLFTLISMRFGW).

It is found in the cell inner membrane. This is an uncharacterized protein from Escherichia coli (strain K12).